Reading from the N-terminus, the 141-residue chain is Hemoglobin subunit alpha-D (141 aa).

The Globin domain maps to Met-1–Arg-141. Heme b contacts are provided by His-58 and His-87.

The protein belongs to the globin family. Heterotetramer of two alpha-D chains and two beta chains. In terms of tissue distribution, red blood cells.

Its function is as follows. Involved in oxygen transport from the lung to the various peripheral tissues. The polypeptide is Hemoglobin subunit alpha-D (HBAD) (Anser indicus (Bar-headed goose)).